The following is a 185-amino-acid chain: Kappa-casein (185 aa).

Residues 1 to 20 (MKSFFLVVNILALTLPFLGA) form the signal peptide. A glycan (O-linked (GalNAc...) threonine) is linked at Thr-143. Ser-161 bears the Phosphoserine; alternate mark. Residue Ser-161 is glycosylated (O-linked (GalNAc...) serine; alternate). The O-linked (GalNAc...) threonine glycan is linked to Thr-178. The residue at position 179 (Ser-179) is a Phosphoserine.

This sequence belongs to the kappa-casein family. Mammary gland specific. Secreted in milk.

It is found in the secreted. Its function is as follows. Kappa-casein stabilizes micelle formation, preventing casein precipitation in milk. The sequence is that of Kappa-casein (CSN3) from Equus caballus (Horse).